The sequence spans 358 residues: Stearoyl-CoA desaturase 2 (358 aa).

The Cytoplasmic portion of the chain corresponds to 1-71; sequence MPAHILQEIS…EGPPPKLEYV (71 aa). Residues 14–43 are disordered; sequence SATTTITAPPSGGQQNGGEKFEKNPHHWGA. Over residues 32–43 the composition is skewed to basic and acidic residues; the sequence is EKFEKNPHHWGA. Residues 72 to 92 traverse the membrane as a helical segment; it reads WRNIVLMALLHIGALYGITLV. Asn74 lines the substrate pocket. The Lumenal portion of the chain corresponds to 93-96; the sequence is PSCK. Residues 97-117 traverse the membrane as a helical segment; the sequence is VYTCLFAYLYYVISALGITAG. The Cytoplasmic segment spans residues 118–216; the sequence is AHRLWSHRTY…EKLVMFQRRY (99 aa). His119 and His124 together coordinate Fe cation. The short motif at 119-124 is the Histidine box-1 element; sequence HRLWSH. Substrate is bound by residues Asn147, Arg154, and Asp155. Fe cation is bound by residues His156, His159, and His160. The short motif at 156-160 is the Histidine box-2 element; the sequence is HRAHH. The substrate site is built by Arg187 and Lys188. The helical transmembrane segment at 217-236 threads the bilayer; it reads YKPGLLLMCFILPTLVPWYC. Residues 237–240 lie on the Lumenal side of the membrane; sequence WGET. The helical transmembrane segment at 241-262 threads the bilayer; the sequence is FVNSLCVSTFLRYAVVLNATWL. A substrate-binding site is contributed by Trp261. Over 263–358 the chain is Cytoplasmic; the sequence is VNSAAHLYGY…RTGEESCKSG (96 aa). Residues His268, His297, His300, and His301 each coordinate Fe cation. The short motif at 297 to 301 is the Histidine box-3 element; sequence HNYHH.

This sequence belongs to the fatty acid desaturase type 1 family. It depends on Fe(2+) as a cofactor. Detected in brain and adipose tissue, and at much lower levels in testis. Detected in liver when rats are kept on a fat-free diet, but not when their food contains unsaturated fatty acids.

Its subcellular location is the endoplasmic reticulum membrane. The protein resides in the microsome membrane. The enzyme catalyses octadecanoyl-CoA + 2 Fe(II)-[cytochrome b5] + O2 + 2 H(+) = (9Z)-octadecenoyl-CoA + 2 Fe(III)-[cytochrome b5] + 2 H2O. The catalysed reaction is hexadecanoyl-CoA + 2 Fe(II)-[cytochrome b5] + O2 + 2 H(+) = (9Z)-hexadecenoyl-CoA + 2 Fe(III)-[cytochrome b5] + 2 H2O. Its function is as follows. Stearoyl-CoA desaturase that utilizes O(2) and electrons from reduced cytochrome b5 to introduce the first double bond into saturated fatty acyl-CoA substrates. Catalyzes the insertion of a cis double bond at the delta-9 position into fatty acyl-CoA substrates including palmitoyl-CoA and stearoyl-CoA. Gives rise to a mixture of 16:1 and 18:1 unsaturated fatty acids. Contributes to the biosynthesis of membrane phospholipids, cholesterol esters and triglycerides, especially during embryonic development and in neonates. Important for normal permeability barrier function of the skin in neonates. The sequence is that of Stearoyl-CoA desaturase 2 (Scd2) from Rattus norvegicus (Rat).